The sequence spans 88 residues: DASH complex subunit HSK3 (88 aa).

Over residues 1 to 15 the composition is skewed to low complexity; it reads MSSRGSGANAASRQS. Residues 1 to 24 are disordered; the sequence is MSSRGSGANAASRQSMTASGGAVK.

Belongs to the DASH complex HSK3 family. Component of the DASH complex consisting of ASK1, DAD1, DAD2, DAD3, DAD4, DAM1, DUO1, HSK3, SPC19 and SPC34, with a stoichiometry of one copy of each subunit per complex. Multiple DASH complexes oligomerize to form a ring that encircles spindle microtubules and organizes the rod-like NDC80 complexes of the outer kinetochore. DASH complex oligomerization strengthens microtubule attachments. On cytoplasmic microtubules, DASH complexes appear to form patches instead of rings.

The protein resides in the nucleus. It is found in the cytoplasm. The protein localises to the cytoskeleton. Its subcellular location is the spindle. It localises to the chromosome. The protein resides in the centromere. It is found in the kinetochore. Its function is as follows. Component of the DASH complex that connects microtubules with kinetochores and couples microtubule depolymerisation to chromosome movement; it is involved in retrieving kinetochores to the spindle poles before their re-orientation on the spindle in early mitosis and allows microtubule depolymerization to pull chromosomes apart and resist detachment during anaphase. Kinetochores, consisting of a centromere-associated inner segment and a microtubule-contacting outer segment, play a crucial role in chromosome segregation by mediating the physical connection between centromeric DNA and microtubules. Kinetochores also serve as an input point for the spindle assembly checkpoint, which delays anaphase until all chromosomes have bioriented on the mitotic spindle. In Chaetomium thermophilum (strain DSM 1495 / CBS 144.50 / IMI 039719) (Thermochaetoides thermophila), this protein is DASH complex subunit HSK3.